Reading from the N-terminus, the 184-residue chain is Probable RNA 2'-phosphotransferase (184 aa).

It belongs to the KptA/TPT1 family.

Removes the 2'-phosphate from RNA via an intermediate in which the phosphate is ADP-ribosylated by NAD followed by a presumed transesterification to release the RNA and generate ADP-ribose 1''-2''-cyclic phosphate (APPR&gt;P). May function as an ADP-ribosylase. This chain is Probable RNA 2'-phosphotransferase, found in Escherichia coli O139:H28 (strain E24377A / ETEC).